The sequence spans 389 residues: Glutamate 5-kinase (389 aa).

ATP is bound at residue Lys16. Substrate-binding residues include Ser56, Asp143, and Asn155. Residue 175-176 (SD) participates in ATP binding. Residues 281 to 358 (AGELHVDEGA…AEIEAILGYA (78 aa)) enclose the PUA domain.

Belongs to the glutamate 5-kinase family.

Its subcellular location is the cytoplasm. The enzyme catalyses L-glutamate + ATP = L-glutamyl 5-phosphate + ADP. The protein operates within amino-acid biosynthesis; L-proline biosynthesis; L-glutamate 5-semialdehyde from L-glutamate: step 1/2. Catalyzes the transfer of a phosphate group to glutamate to form L-glutamate 5-phosphate. In Rhizobium rhizogenes (strain K84 / ATCC BAA-868) (Agrobacterium radiobacter), this protein is Glutamate 5-kinase.